We begin with the raw amino-acid sequence, 360 residues long: Cell division protein DivIB (360 aa).

A disordered region spans residues 1 to 54 (MTEKDSNVEESVLEVEQASQVELDSEQISPAEKESVLAEEKEFSTDVDIPEMTA). Topologically, residues 1-139 (MTEKDSNVEE…VDIPSKVVWK (139 aa)) are cytoplasmic. Residues 17–28 (QASQVELDSEQI) show a composition bias toward polar residues. Positions 31–44 (AEKESVLAEEKEFS) are enriched in basic and acidic residues. The helical transmembrane segment at 140-160 (AIPVLVTSLLLAALALYFISP) threads the bilayer. Residues 161 to 360 (TSKKKQIEVV…MEVGIYRYAS (200 aa)) lie on the Extracellular side of the membrane. Positions 162-233 (SKKKQIEVVG…ATFTIHIKEY (72 aa)) constitute a POTRA domain.

This sequence belongs to the FtsQ/DivIB family. DivIB subfamily.

The protein localises to the cell membrane. Its function is as follows. Cell division protein that may be involved in stabilizing or promoting the assembly of the division complex. This is Cell division protein DivIB from Streptococcus suis (strain GZ1).